Reading from the N-terminus, the 347-residue chain is Phosphoribosylformylglycinamidine cyclo-ligase (347 aa).

This sequence belongs to the AIR synthase family.

It is found in the cytoplasm. It carries out the reaction 2-formamido-N(1)-(5-O-phospho-beta-D-ribosyl)acetamidine + ATP = 5-amino-1-(5-phospho-beta-D-ribosyl)imidazole + ADP + phosphate + H(+). It participates in purine metabolism; IMP biosynthesis via de novo pathway; 5-amino-1-(5-phospho-D-ribosyl)imidazole from N(2)-formyl-N(1)-(5-phospho-D-ribosyl)glycinamide: step 2/2. The polypeptide is Phosphoribosylformylglycinamidine cyclo-ligase (Yersinia pseudotuberculosis serotype IB (strain PB1/+)).